The following is a 102-amino-acid chain: UPF0147 protein MTH_1407 (102 aa).

The protein belongs to the UPF0147 family.

The sequence is that of UPF0147 protein MTH_1407 from Methanothermobacter thermautotrophicus (strain ATCC 29096 / DSM 1053 / JCM 10044 / NBRC 100330 / Delta H) (Methanobacterium thermoautotrophicum).